A 385-amino-acid polypeptide reads, in one-letter code: 1-deoxy-D-xylulose 5-phosphate reductoisomerase (385 aa).

T10, G11, S12, I13, G36, N38, and N122 together coordinate NADPH. Position 123 (K123) interacts with 1-deoxy-D-xylulose 5-phosphate. An NADPH-binding site is contributed by E124. D148 lines the Mn(2+) pocket. 1-deoxy-D-xylulose 5-phosphate-binding residues include S149, E150, S174, and H197. Residue E150 coordinates Mn(2+). Residue G203 coordinates NADPH. Positions 210, 215, 216, and 219 each coordinate 1-deoxy-D-xylulose 5-phosphate. Position 219 (E219) interacts with Mn(2+).

Belongs to the DXR family. It depends on Mg(2+) as a cofactor. Requires Mn(2+) as cofactor.

The catalysed reaction is 2-C-methyl-D-erythritol 4-phosphate + NADP(+) = 1-deoxy-D-xylulose 5-phosphate + NADPH + H(+). It participates in isoprenoid biosynthesis; isopentenyl diphosphate biosynthesis via DXP pathway; isopentenyl diphosphate from 1-deoxy-D-xylulose 5-phosphate: step 1/6. Functionally, catalyzes the NADPH-dependent rearrangement and reduction of 1-deoxy-D-xylulose-5-phosphate (DXP) to 2-C-methyl-D-erythritol 4-phosphate (MEP). This is 1-deoxy-D-xylulose 5-phosphate reductoisomerase from Citrifermentans bemidjiense (strain ATCC BAA-1014 / DSM 16622 / JCM 12645 / Bem) (Geobacter bemidjiensis).